Consider the following 736-residue polypeptide: MSNDCTCPVTGRVDKPIASSGRANRDWWPHQLNLKILHQNPPLGNPMGEEFSYAEEFKKLDLEALKKDLYALMTDSQEWWPADYGHYGGLFIRMAWHSAGTYRTGDGRGGGGSGSQRFAPLNSWPDNVNLDKARRLLWPIKQKYGRKISWADLMILAGNCALESMGFKTFGFGGGREDIWEPEEDIYWGSEAEWLATSDKPKSRYSGDRDLENPLAAVQMGLIYVNPEGPDGNPDPVASGRDVRETFGRMAMNDEETVALVAGGHTFGKCHGAGPATHVGPEPEAAPIEEQGLGWKSSFRSGKGGDTIGSGIEGAWKPNPTTWDMGYLKVLFKYEWELVKSPAGANQWLAKDVDEEDMVVDAHDPSKKHRPMMTTADLSLRFDPIYEPIARDYQQNPEKFADAFARAWFKLTHRDMGPRSRYLGAEVPAEELIWQDPVPTVDHQLIDGQDIAALKDTILASGLSVSQLVSTAWASASTFRGSDKRGGANGGRIRLAPQKDWEVNQPAQLKTVLQTLERIQKEYNDAQSGGKRVSLADLIVLGGCAGIEQAAKNAGQAVSVPFTPGRTDATQEQTDVASFAVLEPAADGFRNYLKTRYTVSAEELLVDRAQLLTLTAPEMTVLLGGMRVLNANYGQSRHGVFTKRPETLTNDFFLNLLDMGTVWKATSEAGDLFEGRDHTSGELKWTATRVDLIFGSNSQLRALAEVYGSGDSQEKFLHDFVAVWEKVMNLDRFDLA.

Positions 96–224 form a cross-link, tryptophyl-tyrosyl-methioninium (Trp-Tyr) (with M-250); sequence WHSAGTYRTG…LAAVQMGLIY (129 aa). Histidine 97 serves as the catalytic Proton acceptor. A cross-link (tryptophyl-tyrosyl-methioninium (Tyr-Met) (with W-96)) is located at residues 224–250; that stretch reads YVNPEGPDGNPDPVASGRDVRETFGRM. Residue histidine 265 participates in heme b binding.

It belongs to the peroxidase family. Peroxidase/catalase subfamily. Homodimer or homotetramer. It depends on heme b as a cofactor. Post-translationally, formation of the three residue Trp-Tyr-Met cross-link is important for the catalase, but not the peroxidase activity of the enzyme.

It carries out the reaction H2O2 + AH2 = A + 2 H2O. The enzyme catalyses 2 H2O2 = O2 + 2 H2O. Its function is as follows. Bifunctional enzyme with both catalase and broad-spectrum peroxidase activity. This chain is Catalase-peroxidase, found in Pelobacter propionicus (strain DSM 2379 / NBRC 103807 / OttBd1).